The chain runs to 199 residues: DnaJ homolog subfamily C member 5B (199 aa).

S14 bears the Phosphoserine mark. The region spanning 19–84 (ALYEILGLHK…SKRSIYDKYG (66 aa)) is the J domain.

As to quaternary structure, interacts with the chaperone complex consisting of HSC70 and SGTA. Palmitoylated. Palmitoylation is not required for membrane association. Testis specific.

The protein resides in the membrane. This chain is DnaJ homolog subfamily C member 5B (DNAJC5B), found in Homo sapiens (Human).